We begin with the raw amino-acid sequence, 96 residues long: Nucleoid-associated protein TC_0612 (96 aa).

The protein belongs to the YbaB/EbfC family. Homodimer.

The protein resides in the cytoplasm. The protein localises to the nucleoid. In terms of biological role, binds to DNA and alters its conformation. May be involved in regulation of gene expression, nucleoid organization and DNA protection. In Chlamydia muridarum (strain MoPn / Nigg), this protein is Nucleoid-associated protein TC_0612.